The sequence spans 344 residues: MERIVTPAEMFEDGNSELSLRPQKINEYIGQDKVKERLNIFIKAAKNRKEALDHVLLYGPPGLGKTTLANIIAKEMTGDLKITSGPAIERAGDLAAILTTLKDYDVLFIDEIHRLNRSVEEILYPAMEDYALDIVIGKGAAAKSIRLDLPKFTLIGATTRIGMLTSPLRDRFGVLCAMEYYDENQLKEIVIRSAAVFGCKITEEGALEIASRSRGTPRIANRLLKRVRDYSEVKSNTVISLKEAREALELLEVDNQGFDKVDNKILEAIIDNFNGGPVGIETLSYFIGEELGTVEDVYEPYLLQKGFIVRTPRGRIASDKAYKHLGRVNNKNNNSNKGQTSFFK.

Residues 1–181 (MERIVTPAEM…FGVLCAMEYY (181 aa)) are large ATPase domain (RuvB-L). ATP contacts are provided by residues leucine 20, arginine 21, glycine 62, lysine 65, threonine 66, threonine 67, 128–130 (EDY), arginine 171, tyrosine 181, and arginine 218. Position 66 (threonine 66) interacts with Mg(2+). Positions 182 to 252 (DENQLKEIVI…EAREALELLE (71 aa)) are small ATPAse domain (RuvB-S). The head domain (RuvB-H) stretch occupies residues 255–344 (NQGFDKVDNK…SNKGQTSFFK (90 aa)). Residues arginine 310 and arginine 315 each contribute to the DNA site.

This sequence belongs to the RuvB family. In terms of assembly, homohexamer. Forms an RuvA(8)-RuvB(12)-Holliday junction (HJ) complex. HJ DNA is sandwiched between 2 RuvA tetramers; dsDNA enters through RuvA and exits via RuvB. An RuvB hexamer assembles on each DNA strand where it exits the tetramer. Each RuvB hexamer is contacted by two RuvA subunits (via domain III) on 2 adjacent RuvB subunits; this complex drives branch migration. In the full resolvosome a probable DNA-RuvA(4)-RuvB(12)-RuvC(2) complex forms which resolves the HJ.

It is found in the cytoplasm. The enzyme catalyses ATP + H2O = ADP + phosphate + H(+). Its function is as follows. The RuvA-RuvB-RuvC complex processes Holliday junction (HJ) DNA during genetic recombination and DNA repair, while the RuvA-RuvB complex plays an important role in the rescue of blocked DNA replication forks via replication fork reversal (RFR). RuvA specifically binds to HJ cruciform DNA, conferring on it an open structure. The RuvB hexamer acts as an ATP-dependent pump, pulling dsDNA into and through the RuvAB complex. RuvB forms 2 homohexamers on either side of HJ DNA bound by 1 or 2 RuvA tetramers; 4 subunits per hexamer contact DNA at a time. Coordinated motions by a converter formed by DNA-disengaged RuvB subunits stimulates ATP hydrolysis and nucleotide exchange. Immobilization of the converter enables RuvB to convert the ATP-contained energy into a lever motion, pulling 2 nucleotides of DNA out of the RuvA tetramer per ATP hydrolyzed, thus driving DNA branch migration. The RuvB motors rotate together with the DNA substrate, which together with the progressing nucleotide cycle form the mechanistic basis for DNA recombination by continuous HJ branch migration. Branch migration allows RuvC to scan DNA until it finds its consensus sequence, where it cleaves and resolves cruciform DNA. This chain is Holliday junction branch migration complex subunit RuvB, found in Clostridium botulinum (strain Alaska E43 / Type E3).